Reading from the N-terminus, the 351-residue chain is Histidinol-phosphate aminotransferase 2 (351 aa).

At Lys-210 the chain carries N6-(pyridoxal phosphate)lysine.

Belongs to the class-II pyridoxal-phosphate-dependent aminotransferase family. Histidinol-phosphate aminotransferase subfamily. In terms of assembly, homodimer. Requires pyridoxal 5'-phosphate as cofactor.

The catalysed reaction is L-histidinol phosphate + 2-oxoglutarate = 3-(imidazol-4-yl)-2-oxopropyl phosphate + L-glutamate. It participates in amino-acid biosynthesis; L-histidine biosynthesis; L-histidine from 5-phospho-alpha-D-ribose 1-diphosphate: step 7/9. The polypeptide is Histidinol-phosphate aminotransferase 2 (hisC2) (Rhizobium meliloti (strain 1021) (Ensifer meliloti)).